The following is a 339-amino-acid chain: Homeobox protein Hox-D13 (339 aa).

Residues 1–33 are disordered; it reads MSRSGTWDMDGLRADGGAAGAAPASSSSSVAAP. Residues 20–33 show a composition bias toward low complexity; the sequence is GAAPASSSSSVAAP. The segment at residues 272 to 331 is a DNA-binding region (homeobox); sequence GRKKRVPYTKLQLKELENEYAINKFINKDKRRRISAATNLSERQVTIWFQNRRVKDKKIV.

Belongs to the Abd-B homeobox family.

The protein resides in the nucleus. In terms of biological role, sequence-specific transcription factor that binds gene promoters and activates their transcription. Part of a developmental regulatory system that provides cells with specific positional identities on the anterior-posterior axis. This is Homeobox protein Hox-D13 (Hoxd13) from Mus musculus (Mouse).